We begin with the raw amino-acid sequence, 217 residues long: Small ribosomal subunit protein uS3 (217 aa).

One can recognise a KH type-2 domain in the interval isoleucine 38–lysine 106.

This sequence belongs to the universal ribosomal protein uS3 family. As to quaternary structure, part of the 30S ribosomal subunit. Forms a tight complex with proteins S10 and S14.

In terms of biological role, binds the lower part of the 30S subunit head. Binds mRNA in the 70S ribosome, positioning it for translation. This chain is Small ribosomal subunit protein uS3, found in Streptococcus pneumoniae serotype 19F (strain G54).